A 337-amino-acid polypeptide reads, in one-letter code: MAGLWRSNSTLDVERGRNRTQTETVQTVPRQAQGILELLSSPAAREALQGSDFARWRGVPVSPAGGYFELAPLRSVNTFARGLRSVFGGSTSRREAYIPQHGFYRLNYVLVAVVPHVEHSDPGEVTVQLVENTNPTRAVDGQELTARLADGSFVFAAAPTYDIVLEQAPILVEGESAGVVQRMFGIRTSVSGSLTTGSVVSVYPIWSAEFPIQGATFNHVAPSIVHIDRFNRSVAFEIDVLRRRFSLMRPLHLARSRESFQVGRMSLDVARPSVVRPPPVDPQAEGGIHVNSPTSEQSQGEDRVPRAGLASGTSVGEGANHEFLSGAVKSTAPVRQT.

The segment covering 1-11 (MAGLWRSNSTL) has biased composition (polar residues). Disordered stretches follow at residues 1–24 (MAGL…QTET) and 273–337 (SVVR…VRQT).

It is found in the host cell junction. The protein localises to the host plasmodesma. Functionally, transports viral genome to neighboring plant cells directly through plasmosdesmata, without any budding. The movement protein allows efficient cell to cell propagation, by bypassing the host cell wall barrier. Acts by forming a tubular structure at the host plasmodesmata, enlarging it enough to allow free passage of virion capsids. The sequence is that of Movement protein from Olive latent virus 2 (isolate Italy) (OLV-2).